We begin with the raw amino-acid sequence, 288 residues long: 4-diphosphocytidyl-2-C-methyl-D-erythritol kinase (288 aa).

The active site involves Lys-8. 92–102 (PVAAGMAGGST) is a binding site for ATP. The active site involves Asp-134.

Belongs to the GHMP kinase family. IspE subfamily.

The enzyme catalyses 4-CDP-2-C-methyl-D-erythritol + ATP = 4-CDP-2-C-methyl-D-erythritol 2-phosphate + ADP + H(+). It functions in the pathway isoprenoid biosynthesis; isopentenyl diphosphate biosynthesis via DXP pathway; isopentenyl diphosphate from 1-deoxy-D-xylulose 5-phosphate: step 3/6. Functionally, catalyzes the phosphorylation of the position 2 hydroxy group of 4-diphosphocytidyl-2C-methyl-D-erythritol. This Clostridium perfringens (strain ATCC 13124 / DSM 756 / JCM 1290 / NCIMB 6125 / NCTC 8237 / Type A) protein is 4-diphosphocytidyl-2-C-methyl-D-erythritol kinase.